Consider the following 132-residue polypeptide: Small ribosomal subunit protein uS11 (132 aa).

It belongs to the universal ribosomal protein uS11 family. In terms of assembly, part of the 30S ribosomal subunit. Interacts with proteins S7 and S18. Binds to IF-3.

Functionally, located on the platform of the 30S subunit, it bridges several disparate RNA helices of the 16S rRNA. Forms part of the Shine-Dalgarno cleft in the 70S ribosome. This is Small ribosomal subunit protein uS11 from Clostridium kluyveri (strain NBRC 12016).